The sequence spans 66 residues: ATP synthase protein 8 (66 aa).

A helical transmembrane segment spans residues 8–24 (PWPMVIMSMILTLFYIT). Residue K54 is modified to N6-acetyllysine; alternate. K54 carries the post-translational modification N6-succinyllysine; alternate. K57 carries the N6-acetyllysine modification.

This sequence belongs to the ATPase protein 8 family. In terms of assembly, F-type ATPases have 2 components, CF(1) - the catalytic core - and CF(0) - the membrane proton channel. Component of an ATP synthase complex composed of ATP5PB, ATP5MC1, ATP5F1E, ATP5PD, ATP5ME, ATP5PF, ATP5MF, MT-ATP6, MT-ATP8, ATP5F1A, ATP5F1B, ATP5F1D, ATP5F1C, ATP5PO, ATP5MG, ATP5MK and ATP5MJ. Interacts with PRICKLE3.

Its subcellular location is the mitochondrion membrane. In terms of biological role, mitochondrial membrane ATP synthase (F(1)F(0) ATP synthase or Complex V) produces ATP from ADP in the presence of a proton gradient across the membrane which is generated by electron transport complexes of the respiratory chain. F-type ATPases consist of two structural domains, F(1) - containing the extramembraneous catalytic core and F(0) - containing the membrane proton channel, linked together by a central stalk and a peripheral stalk. During catalysis, ATP synthesis in the catalytic domain of F(1) is coupled via a rotary mechanism of the central stalk subunits to proton translocation. Part of the complex F(0) domain. Minor subunit located with subunit a in the membrane. The protein is ATP synthase protein 8 (MT-ATP8) of Alouatta sara (Bolivian red howler monkey).